Here is a 384-residue protein sequence, read N- to C-terminus: Sialyltransferase-like protein 3 (384 aa).

The Cytoplasmic segment spans residues 1–5 (MKRRH). Residues 6–26 (WSHPSCGLLLLVAVFCLLLVF) traverse the membrane as a helical; Signal-anchor for type II membrane protein segment. Over 27 to 384 (RCSQLRHSGD…FRLPPVSFYR (358 aa)) the chain is Lumenal. Asn241 is a glycosylation site (N-linked (GlcNAc...) asparagine).

This sequence belongs to the glycosyltransferase 29 family.

It localises to the golgi apparatus membrane. Its function is as follows. Possesses sialyltransferase-like activity in vitro. Transfers sialic acid to the glycoprotein asialofetuin. The transferred sialic acid is linked to galactose of Gal-beta-1,3-GalNAc through alpha-2,6-linkage. This is Sialyltransferase-like protein 3 from Oryza sativa subsp. indica (Rice).